The sequence spans 770 residues: Protein argonaute (770 aa).

The N-terminal domain stretch occupies residues 1–151 (MKAKVVINLV…VIHIIHQIQS (151 aa)). One can recognise a PAZ domain in the interval 154 to 272 (TLWELVNKDP…LLPQLVVPTY (119 aa)). Residues 276–361 (QLESDVAKEI…SQLLLWTNYS (86 aa)) form an interdomain connector region. Residues 362–544 (RKYPVILPYE…LSKLGVKYYV (183 aa)) form a mid domain region. A Piwi domain is found at 473 to 756 (GLAFIAARNK…FANAIRNEWK (284 aa)). Residues Asp558, Glu596, Asp628, and His745 contribute to the active site. Residue Asp558 coordinates Mn(2+). Residues Asp628, His745, and Val770 each coordinate Mn(2+).

It belongs to the argonaute family. Long pAgo subfamily. Monomer. Requires Mn(2+) as cofactor.

Inhibited at greater than 500 mM NaCl. Its function is as follows. A DNA-guided ssDNA endonuclease that may play a role in defense against invading mobile genetic elements. Uses short 5'-phospho-ssDNA sequences as guides (gDNA) to bind complementary target strands, resulting in cleavage of the target DNA (tDNA). Endonucleolytically cleaves DNA in short dsDNA (the gDNA indicates where to cleave on the tDNA). Efficient guide-dependent target DNA cleavage requires a minimal gDNA length of 15 nucleotides (nt) and works up to at least 31 nt. Overexpression decreases plasmid transformation efficiency. Has no appreciable activity with gRNA or on target RNA. Also has guide-independent activity on plasmid DNA called 'chopping'. The cleavage site is 10 nucleotides (nt) downstream of the target residue base-paired with the 5'-end of the gDNA, cleavage is insensitive to adenine methylation. DNA cleavage produces 5'-phosphomonoesters (as it can be ligated by T4 DNA ligase). In Pyrococcus furiosus (strain ATCC 43587 / DSM 3638 / JCM 8422 / Vc1), this protein is Protein argonaute.